Consider the following 337-residue polypeptide: Inositol 2-dehydrogenase (337 aa).

It belongs to the Gfo/Idh/MocA family. In terms of assembly, homotetramer.

It catalyses the reaction myo-inositol + NAD(+) = scyllo-inosose + NADH + H(+). Functionally, involved in the oxidation of myo-inositol (MI) to 2-keto-myo-inositol (2KMI or 2-inosose). This chain is Inositol 2-dehydrogenase, found in Serratia proteamaculans (strain 568).